Reading from the N-terminus, the 568-residue chain is Urease subunit alpha (568 aa).

Residues 131–568 (GGMDAHIHFI…LPLAQRYFLY (438 aa)) form the Urease domain. The Ni(2+) site is built by H136, H138, and K219. K219 carries the N6-carboxylysine modification. H221 is a substrate binding site. Ni(2+) contacts are provided by H248 and H274. Catalysis depends on H322, which acts as the Proton donor. Ni(2+) is bound at residue D362.

The protein belongs to the metallo-dependent hydrolases superfamily. Urease alpha subunit family. Heterotrimer of UreA (gamma), UreB (beta) and UreC (alpha) subunits. Three heterotrimers associate to form the active enzyme. Ni cation serves as cofactor. Post-translationally, carboxylation allows a single lysine to coordinate two nickel ions.

The protein resides in the cytoplasm. It catalyses the reaction urea + 2 H2O + H(+) = hydrogencarbonate + 2 NH4(+). It participates in nitrogen metabolism; urea degradation; CO(2) and NH(3) from urea (urease route): step 1/1. The protein is Urease subunit alpha of Cereibacter sphaeroides (strain KD131 / KCTC 12085) (Rhodobacter sphaeroides).